The primary structure comprises 521 residues: Glucose-1-phosphate adenylyltransferase small subunit, chloroplastic/amyloplastic (521 aa).

The segment at 1 to 32 (MAASIGALKSSPSSNNCINERRNDSTRAVSSR) is disordered. Residues 1–72 (MAASIGALKS…RSPMIVSPKA (72 aa)) constitute a chloroplast transit peptide. Lysine 268 lines the substrate pocket. Residues 444 to 454 (TDADRKLLAAK) form an allosteric regulation region.

It belongs to the bacterial/plant glucose-1-phosphate adenylyltransferase family. In terms of assembly, heterotetramer. As to expression, leaves and tubers.

It is found in the plastid. Its subcellular location is the chloroplast. The protein resides in the amyloplast. It catalyses the reaction alpha-D-glucose 1-phosphate + ATP + H(+) = ADP-alpha-D-glucose + diphosphate. It functions in the pathway glycan biosynthesis; starch biosynthesis. Activated by 3'phosphoglycerate, inhibited by orthophosphate. Allosteric regulation. This protein plays a role in synthesis of starch. It catalyzes the synthesis of the activated glycosyl donor, ADP-glucose from Glc-1-P and ATP. In Solanum tuberosum (Potato), this protein is Glucose-1-phosphate adenylyltransferase small subunit, chloroplastic/amyloplastic.